The following is a 273-amino-acid chain: HMP-PP phosphatase (273 aa).

Asp-8 (nucleophile) is an active-site residue. Mg(2+)-binding residues include Asp-8, Asp-10, and Asp-212.

Belongs to the HAD-like hydrolase superfamily. Cof family. Mg(2+) is required as a cofactor.

The catalysed reaction is 4-amino-2-methyl-5-(diphosphooxymethyl)pyrimidine + H2O = 4-amino-2-methyl-5-(phosphooxymethyl)pyrimidine + phosphate + H(+). Its function is as follows. Catalyzes the hydrolysis of 4-amino-2-methyl-5-hydroxymethylpyrimidine pyrophosphate (HMP-PP) to 4-amino-2-methyl-5-hydroxymethylpyrimidine phosphate (HMP-P). The sequence is that of HMP-PP phosphatase from Yersinia pseudotuberculosis serotype O:1b (strain IP 31758).